The chain runs to 246 residues: Probable transcriptional regulatory protein NT01CX_1819 (246 aa).

It belongs to the TACO1 family.

It is found in the cytoplasm. The polypeptide is Probable transcriptional regulatory protein NT01CX_1819 (Clostridium novyi (strain NT)).